Reading from the N-terminus, the 104-residue chain is L-rhamnose mutarotase (104 aa).

Substrate is bound at residue Tyr18. The Proton donor role is filled by His22. Substrate contacts are provided by residues Tyr41 and 76–77 (WW).

It belongs to the rhamnose mutarotase family. In terms of assembly, homodimer.

The protein localises to the cytoplasm. It catalyses the reaction alpha-L-rhamnose = beta-L-rhamnose. Its pathway is carbohydrate metabolism; L-rhamnose metabolism. Involved in the anomeric conversion of L-rhamnose. This chain is L-rhamnose mutarotase, found in Burkholderia orbicola (strain MC0-3).